The sequence spans 1388 residues: Kinesin-like protein KIF15-A (1388 aa).

In terms of domain architecture, Kinesin motor spans 26–364; the sequence is AIKVFVRIRP…LQFAQRAKLI (339 aa). 110-117 contacts ATP; that stretch reads GQTGSGKT. The stretch at 369–1383 forms a coiled coil; it reads VVNEDTQGNV…ENLFLKESKK (1015 aa). The segment at 1127–1156 is disordered; the sequence is EQEKIRPASSNSSSPVVLPETPRTPEGNPY. The necessary for its targeting to microtubule minus ends stretch occupies residues 1139–1388; sequence SSPVVLPETP…KESKKCEHCN (250 aa).

Belongs to the TRAFAC class myosin-kinesin ATPase superfamily. Kinesin family. KLP2 subfamily. As to quaternary structure, homodimer. Dimerization is required for targeting to microtubule minus ends. Found in a complex with tpx2 and microtubules. Its association with microtubules and targeting to microtubule minus ends requires tpx2. Strongly expressed in testis and weakly in lung (at protein level).

The protein resides in the cytoplasm. Its subcellular location is the cytoskeleton. It is found in the microtubule organizing center. The protein localises to the centrosome. It localises to the spindle. The protein resides in the spindle pole. Its function is as follows. Plus-end directed kinesin-like motor enzyme involved in mitotic spindle assembly. Required for centrosome separation and maintenance of spindle bipolarity during mitosis. The sequence is that of Kinesin-like protein KIF15-A (kif15-a) from Xenopus laevis (African clawed frog).